We begin with the raw amino-acid sequence, 181 residues long: Peptidyl-tRNA hydrolase (181 aa).

Residue tyrosine 14 participates in tRNA binding. Histidine 19 serves as the catalytic Proton acceptor. TRNA contacts are provided by phenylalanine 60, asparagine 62, and asparagine 106.

It belongs to the PTH family. As to quaternary structure, monomer.

The protein resides in the cytoplasm. It catalyses the reaction an N-acyl-L-alpha-aminoacyl-tRNA + H2O = an N-acyl-L-amino acid + a tRNA + H(+). Functionally, hydrolyzes ribosome-free peptidyl-tRNAs (with 1 or more amino acids incorporated), which drop off the ribosome during protein synthesis, or as a result of ribosome stalling. Catalyzes the release of premature peptidyl moieties from peptidyl-tRNA molecules trapped in stalled 50S ribosomal subunits, and thus maintains levels of free tRNAs and 50S ribosomes. This is Peptidyl-tRNA hydrolase from Campylobacter curvus (strain 525.92).